The following is a 602-amino-acid chain: Elongation factor 4 (602 aa).

A tr-type G domain is found at Ser7–Gln189. GTP-binding positions include Asp19–Thr24 and Asn136–Asp139.

The protein belongs to the TRAFAC class translation factor GTPase superfamily. Classic translation factor GTPase family. LepA subfamily.

Its subcellular location is the cell inner membrane. The catalysed reaction is GTP + H2O = GDP + phosphate + H(+). Functionally, required for accurate and efficient protein synthesis under certain stress conditions. May act as a fidelity factor of the translation reaction, by catalyzing a one-codon backward translocation of tRNAs on improperly translocated ribosomes. Back-translocation proceeds from a post-translocation (POST) complex to a pre-translocation (PRE) complex, thus giving elongation factor G a second chance to translocate the tRNAs correctly. Binds to ribosomes in a GTP-dependent manner. This Prochlorococcus marinus (strain MIT 9312) protein is Elongation factor 4.